The sequence spans 154 residues: Myoglobin (154 aa).

The Globin domain occupies 2-148 (GLSDGEWQSV…FRNDIAAKYK (147 aa)). S4 bears the Phosphoserine mark. H65 is a binding site for nitrite. H65 contacts O2. At T68 the chain carries Phosphothreonine. H94 is a heme b binding site.

It belongs to the globin family. Monomeric.

The protein localises to the cytoplasm. It is found in the sarcoplasm. The enzyme catalyses Fe(III)-heme b-[protein] + nitric oxide + H2O = Fe(II)-heme b-[protein] + nitrite + 2 H(+). It catalyses the reaction H2O2 + AH2 = A + 2 H2O. Monomeric heme protein which primary function is to store oxygen and facilitate its diffusion within muscle tissues. Reversibly binds oxygen through a pentacoordinated heme iron and enables its timely and efficient release as needed during periods of heightened demand. Depending on the oxidative conditions of tissues and cells, and in addition to its ability to bind oxygen, it also has a nitrite reductase activity whereby it regulates the production of bioactive nitric oxide. Under stress conditions, like hypoxia and anoxia, it also protects cells against reactive oxygen species thanks to its pseudoperoxidase activity. This Nycticebus coucang (Slow loris) protein is Myoglobin (MB).